Here is a 660-residue protein sequence, read N- to C-terminus: MKAVIFAYHDMGCQGVQAVLDAGYEIAAIFTHADNPAENTFFGSVSRLAAELGIPVYAPDNVNHPIWVDRIAELAPDIIFSFYYRNLLSEEILHLAPAGAFNLHGSLLPAYRGRAPLNWVLVNGESETGVTLHRMVKRADAGEIVASQRVAIAQDDVALTLHHKLCQAARQLLNSILPTMKCGDIPSVPQRESDATYYGRRRPEDGLIDWHKPVSTVHNLVRAVAAPWPGAFSYNGSQKFTIWSSRICPDAQGALPGSVISVSPLRVACADGALEIITGQAGDGITVQGSQLAQTLGLVAGARLNRPPATSGKRRIRVLILGVNGFIGNHLTERLLNEENYEVYGMDIGSNAISRFLLHPRFHFVEGDISIHSEWIEYHVKKCDVVLPLVAIATPIEYTRNPLRVFELDFEENLRIIRYCVKYRKRVVFPSTSEVYGMCTDASFDEDKSNLIVGPVNKPRWIYSVSKQLLDRVIWAYGEKEGLRFTLFRPFNWMGPRLDSLNAARIGSSRAITQLILNLVEGTPIKLIDGGQQKRCFTDIRDGIEALFRIIVNDGDRCDGKIINIGNPDNEASIQELATLLLDSFDKHPLRCHFPPFAGFQVVESRSYYGKGYQDVAHRKPSIDNARRCLGWEPSIAMRDTVEETLDFFLRSVDVAERAS.

Residues 1–304 (MKAVIFAYHD…TLGLVAGARL (304 aa)) form a formyltransferase ArnAFT region. His-104 functions as the Proton donor; for formyltransferase activity in the catalytic mechanism. Residues Arg-114 and 136–140 (VKRAD) contribute to the (6R)-10-formyltetrahydrofolate site. Residues 314-660 (RRIRVLILGV…RSVDVAERAS (347 aa)) form a dehydrogenase ArnADH region. Residues Asp-347 and 368–369 (DI) each bind NAD(+). Residues Ala-393, Tyr-398, and 432–433 (TS) contribute to the UDP-alpha-D-glucuronate site. Glu-434 serves as the catalytic Proton acceptor; for decarboxylase activity. UDP-alpha-D-glucuronate-binding positions include Arg-460, Asn-492, 526 to 535 (KLIDGGQQKR), and Tyr-613. Arg-619 (proton donor; for decarboxylase activity) is an active-site residue.

The protein in the N-terminal section; belongs to the Fmt family. UDP-L-Ara4N formyltransferase subfamily. This sequence in the C-terminal section; belongs to the NAD(P)-dependent epimerase/dehydratase family. UDP-glucuronic acid decarboxylase subfamily. In terms of assembly, homohexamer, formed by a dimer of trimers.

It catalyses the reaction UDP-alpha-D-glucuronate + NAD(+) = UDP-beta-L-threo-pentopyranos-4-ulose + CO2 + NADH. It carries out the reaction UDP-4-amino-4-deoxy-beta-L-arabinose + (6R)-10-formyltetrahydrofolate = UDP-4-deoxy-4-formamido-beta-L-arabinose + (6S)-5,6,7,8-tetrahydrofolate + H(+). The protein operates within nucleotide-sugar biosynthesis; UDP-4-deoxy-4-formamido-beta-L-arabinose biosynthesis; UDP-4-deoxy-4-formamido-beta-L-arabinose from UDP-alpha-D-glucuronate: step 1/3. It participates in nucleotide-sugar biosynthesis; UDP-4-deoxy-4-formamido-beta-L-arabinose biosynthesis; UDP-4-deoxy-4-formamido-beta-L-arabinose from UDP-alpha-D-glucuronate: step 3/3. It functions in the pathway bacterial outer membrane biogenesis; lipopolysaccharide biosynthesis. In terms of biological role, bifunctional enzyme that catalyzes the oxidative decarboxylation of UDP-glucuronic acid (UDP-GlcUA) to UDP-4-keto-arabinose (UDP-Ara4O) and the addition of a formyl group to UDP-4-amino-4-deoxy-L-arabinose (UDP-L-Ara4N) to form UDP-L-4-formamido-arabinose (UDP-L-Ara4FN). The modified arabinose is attached to lipid A and is required for resistance to polymyxin and cationic antimicrobial peptides. The protein is Bifunctional polymyxin resistance protein ArnA of Salmonella enteritidis PT4 (strain P125109).